A 98-amino-acid polypeptide reads, in one-letter code: Large ribosomal subunit protein eL21 (98 aa).

The span at 1 to 17 (MQRSRGFRSKSRRKMTK) shows a compositional bias: basic residues. The segment at 1–28 (MQRSRGFRSKSRRKMTKVVREGRSNPIT) is disordered.

The protein belongs to the eukaryotic ribosomal protein eL21 family.

This chain is Large ribosomal subunit protein eL21, found in Methanobrevibacter smithii (strain ATCC 35061 / DSM 861 / OCM 144 / PS).